The primary structure comprises 148 residues: uncharacterized protein (148 aa).

The 142-residue stretch at 7-148 (LEINYKTDEL…HDVLLWKPIR (142 aa)) folds into the N-acetyltransferase domain.

This is an uncharacterized protein from Staphylococcus aureus (strain Mu50 / ATCC 700699).